Here is a 524-residue protein sequence, read N- to C-terminus: MGMGQEKHTDAASQSRDPEAVAAHENDQLRQRNHALAKALTRATEELRKAKAQLEQFMAPPLTMATMVRVHRCSTDEHGVRHASAEILNGNRRQIVPLSPTVNPAQLGSGQGVLLDANMVIVDSCETPTTGPMRAVSESLADGRLIVSDVGGNRGVVMRASAVARTPINVDDRVVIDPSGTYVLSVLPQEQAQDLLLEETPDVSFTDIGGLDEQIARIRDAVQLPFQHRDLFDRFDLKAPKGVLLYGPPGNGKTLIAKAIAHELAAGSGNDGVFLSVKGPELLNKFVGESERLIRRIFERAKELSGAGRPVIVFIDEMDSLLRTRGTGVSSDVETTIVPQFLTELDGVESLDDVMVIGASNRIDMIDPAVLRPGRLDVKIHVTRPDETAAMAITRHYLTDALPLEPGRDADALAASLVRDLFRRDESRLLATLDEQGRRRGIYMADIVSGAMLRNIVDRAKTKAVKAEILHGSVSRDDEPQGITEARIHEAIDDEYEQNRSTINETDPGQWLRINALTLAADGV.

Residues 1 to 29 form a disordered region; it reads MGMGQEKHTDAASQSRDPEAVAAHENDQL. Residues 22 to 59 are a coiled coil; that stretch reads AAHENDQLRQRNHALAKALTRATEELRKAKAQLEQFMA. 250 to 255 contributes to the ATP binding site; sequence GNGKTL.

It belongs to the AAA ATPase family. As to quaternary structure, homohexamer. Assembles into a hexameric ring structure.

In Bifidobacterium animalis subsp. lactis (strain BB-12), this protein is AAA ATPase forming ring-shaped complexes.